We begin with the raw amino-acid sequence, 193 residues long: dTTP/UTP pyrophosphatase (193 aa).

The Proton acceptor role is filled by Asp-71.

This sequence belongs to the Maf family. YhdE subfamily. It depends on a divalent metal cation as a cofactor.

The protein resides in the cytoplasm. The enzyme catalyses dTTP + H2O = dTMP + diphosphate + H(+). It catalyses the reaction UTP + H2O = UMP + diphosphate + H(+). Nucleoside triphosphate pyrophosphatase that hydrolyzes dTTP and UTP. May have a dual role in cell division arrest and in preventing the incorporation of modified nucleotides into cellular nucleic acids. The chain is dTTP/UTP pyrophosphatase from Dictyoglomus turgidum (strain DSM 6724 / Z-1310).